A 92-amino-acid chain; its full sequence is Neurophysin 2 (92 aa).

Disulfide bonds link Cys-10-Cys-54, Cys-13-Cys-27, Cys-21-Cys-44, Cys-28-Cys-34, Cys-61-Cys-73, Cys-67-Cys-85, and Cys-74-Cys-79.

This sequence belongs to the vasopressin/oxytocin family. As to quaternary structure, there is an equilibrium between the monomeric and dimeric forms. On peptide binding the dimeric form predominates. Post-translationally, a shorter neurophysin molecule (1-90) also exists and is probably derived from the complete protein by proteolytic degradation (in vivo or after extraction).

Its subcellular location is the secreted. Its function is as follows. Neurophysin 2 specifically binds vasopressin. The sequence is that of Neurophysin 2 (AVP) from Loxodonta africana (African elephant).